Here is a 387-residue protein sequence, read N- to C-terminus: Phosphoglycerate kinase (387 aa).

Substrate contacts are provided by residues 21-23 (DLN), Arg-36, 59-62 (HLGR), Arg-113, and Arg-146. ATP contacts are provided by residues Lys-197, Glu-314, and 340-343 (GGDT).

It belongs to the phosphoglycerate kinase family. Monomer.

The protein resides in the cytoplasm. It catalyses the reaction (2R)-3-phosphoglycerate + ATP = (2R)-3-phospho-glyceroyl phosphate + ADP. Its pathway is carbohydrate degradation; glycolysis; pyruvate from D-glyceraldehyde 3-phosphate: step 2/5. The polypeptide is Phosphoglycerate kinase (Pseudomonas syringae pv. syringae (strain B728a)).